The chain runs to 155 residues: Rhombotin-1 (155 aa).

LIM zinc-binding domains follow at residues 21–83 (KGCA…LFGT) and 85–147 (GNCA…GQLN).

It localises to the nucleus. May be involved in gene regulation within neural lineage cells potentially by direct DNA binding or by binding to other transcription factors. This Danio rerio (Zebrafish) protein is Rhombotin-1.